We begin with the raw amino-acid sequence, 263 residues long: Eukaryotic translation initiation factor 3 subunit J-B (263 aa).

Acidic residues-rich tracts occupy residues 1 to 13 and 30 to 50; these read MADS…DNFE and EGED…EEKE. 2 disordered regions span residues 1-75 and 214-235; these read MADS…DKIK and KQKQ…VPGG. The stretch at 30-127 forms a coiled coil; sequence EGEDEEEDVK…EADMELAREA (98 aa). Residues 51–75 are compositionally biased toward basic and acidic residues; sequence EEKKVEQKIAEVKPPEKKKLSDKIK.

The protein belongs to the eIF-3 subunit J family. In terms of assembly, component of the eukaryotic translation initiation factor 3 (eIF-3) complex, which is composed of 13 subunits: eif3a, eif3b, eif3c, eif3d, eif3e, eif3f, eif3g, eif3h, eif3i, eif3j, eif3k, eif3l and eif3m.

Its subcellular location is the cytoplasm. Functionally, component of the eukaryotic translation initiation factor 3 (eIF-3) complex, which is involved in protein synthesis of a specialized repertoire of mRNAs and, together with other initiation factors, stimulates binding of mRNA and methionyl-tRNAi to the 40S ribosome. The eIF-3 complex specifically targets and initiates translation of a subset of mRNAs involved in cell proliferation. This is Eukaryotic translation initiation factor 3 subunit J-B (eif3jb) from Danio rerio (Zebrafish).